The sequence spans 72 residues: MAIQSKYSNTQVESIIAELLAVLEKHQAPTDLSLMALGNCVTHLLQNKVPAESRKVVTEQFAKALSQSVKTN.

Belongs to the UPF0352 family.

The protein is UPF0352 protein Shal_2512 of Shewanella halifaxensis (strain HAW-EB4).